Reading from the N-terminus, the 130-residue chain is Small ribosomal subunit protein uS8 (130 aa).

It belongs to the universal ribosomal protein uS8 family. Part of the 30S ribosomal subunit. Contacts proteins S5 and S12.

Functionally, one of the primary rRNA binding proteins, it binds directly to 16S rRNA central domain where it helps coordinate assembly of the platform of the 30S subunit. This is Small ribosomal subunit protein uS8 from Cereibacter sphaeroides (strain KD131 / KCTC 12085) (Rhodobacter sphaeroides).